Reading from the N-terminus, the 24-residue chain is Coenzyme PQQ synthesis protein A (24 aa).

Positions 16-20 (EVTMY) form a cross-link, pyrroloquinoline quinone (Glu-Tyr).

It belongs to the PqqA family.

Its pathway is cofactor biosynthesis; pyrroloquinoline quinone biosynthesis. Its function is as follows. Required for coenzyme pyrroloquinoline quinone (PQQ) biosynthesis. PQQ is probably formed by cross-linking a specific glutamate to a specific tyrosine residue and excising these residues from the peptide. The protein is Coenzyme PQQ synthesis protein A of Pseudomonas fluorescens (strain Pf0-1).